A 418-amino-acid polypeptide reads, in one-letter code: L-rhamnose isomerase (418 aa).

Residues His262, Asp294, and Asp296 each contribute to the Mn(2+) site.

This sequence belongs to the rhamnose isomerase family. In terms of assembly, homotetramer. Mn(2+) is required as a cofactor.

The protein resides in the cytoplasm. It carries out the reaction L-rhamnopyranose = L-rhamnulose. It participates in carbohydrate degradation; L-rhamnose degradation; glycerone phosphate from L-rhamnose: step 1/3. In terms of biological role, catalyzes the interconversion of L-rhamnose and L-rhamnulose. This Yersinia pseudotuberculosis serotype O:1b (strain IP 31758) protein is L-rhamnose isomerase.